A 445-amino-acid polypeptide reads, in one-letter code: Putative diacyglycerol O-acyltransferase Rv2285 (445 aa).

H135 serves as the catalytic Proton acceptor.

This sequence belongs to the long-chain O-acyltransferase family.

It catalyses the reaction an acyl-CoA + a 1,2-diacyl-sn-glycerol = a triacyl-sn-glycerol + CoA. The catalysed reaction is di-(9Z)-octadecenoylglycerol + (9Z)-octadecenoyl-CoA = 1,2,3-tri-(9Z-octadecenoyl)-glycerol + CoA. The protein operates within glycerolipid metabolism; triacylglycerol biosynthesis. In terms of biological role, catalyzes the terminal and only committed step in triacylglycerol synthesis by using diacylglycerol and fatty acyl CoA as substrates. Required for storage lipid synthesis. Its function is as follows. Upon expression in E.coli functions weakly as a triacylglycerol synthase, making triacylglycerol (TG) from diolein and long-chain fatty acyl-CoA. Has very weak wax synthase activity, incorporating palmityl alcohol into wax esters in the presence of palmitoyl-CoA. The protein is Putative diacyglycerol O-acyltransferase Rv2285 of Mycobacterium tuberculosis (strain ATCC 25618 / H37Rv).